We begin with the raw amino-acid sequence, 327 residues long: MRVLGIETSCDETAVAVLDDGKNVVVNFTVSQIEVHQKFGGVVPEVAARHHLKNLPILLKKAFEKVPPETVDVVAATYGPGLIGALLVGLSAAKGLAISLEKPFVGVNHVEAHVQAVFLANPDLKPPLVVLMVSGGHTQLMKVDEDYSMEVLGETLDDSAGEAFDKVARLLGLGYPGGPVIDRVAKKGDPEKYSFPRPMLDDDSYNFSFAGLKTSVLYFLQREKGYKVEDVAASFQKAVVDILVEKTFRLARNLGIRKIAFVGGVAANSMLREEVRKRAERWNYEVFFPPLELCTDNALMVAKAGYEKAKRGMFSPLSLNADPNLNV.

Fe cation contacts are provided by histidine 109 and histidine 113. Substrate-binding positions include 132–136 (MVSGG), aspartate 165, glycine 178, aspartate 182, and asparagine 268. Aspartate 296 lines the Fe cation pocket.

Belongs to the KAE1 / TsaD family. As to quaternary structure, forms a hexamer composed of two TsaB, TsaD and TsaE trimers. Requires Fe(2+) as cofactor.

It localises to the cytoplasm. It carries out the reaction L-threonylcarbamoyladenylate + adenosine(37) in tRNA = N(6)-L-threonylcarbamoyladenosine(37) in tRNA + AMP + H(+). In terms of biological role, required for the formation of a threonylcarbamoyl group on adenosine at position 37 (t(6)A37) in tRNAs that read codons beginning with adenine. Is involved in the transfer of the threonylcarbamoyl moiety of threonylcarbamoyl-AMP (TC-AMP) to the N6 group of A37, together with TsaE and TsaB. TsaD likely plays a direct catalytic role in this reaction. The chain is tRNA N6-adenosine threonylcarbamoyltransferase from Thermotoga maritima (strain ATCC 43589 / DSM 3109 / JCM 10099 / NBRC 100826 / MSB8).